The chain runs to 380 residues: uncharacterized protein (380 aa).

Positions 1–28 (MQFLSDTQRMVLSRAVCASFFFFHVAVA) are cleaved as a signal peptide. In terms of domain architecture, SPOR spans 307-380 (AGDEKPRGYQ…DAGYETFPLF (74 aa)).

This is an uncharacterized protein from Treponema pallidum (strain Nichols).